The following is a 156-amino-acid chain: Ribosomal RNA large subunit methyltransferase H (156 aa).

S-adenosyl-L-methionine-binding positions include leucine 73, glycine 104, and 123-128 (LSPLTL).

This sequence belongs to the RNA methyltransferase RlmH family. As to quaternary structure, homodimer.

The protein resides in the cytoplasm. It carries out the reaction pseudouridine(1915) in 23S rRNA + S-adenosyl-L-methionine = N(3)-methylpseudouridine(1915) in 23S rRNA + S-adenosyl-L-homocysteine + H(+). Its function is as follows. Specifically methylates the pseudouridine at position 1915 (m3Psi1915) in 23S rRNA. This chain is Ribosomal RNA large subunit methyltransferase H, found in Photobacterium profundum (strain SS9).